A 181-amino-acid chain; its full sequence is MRILGIDPGLRTTGFGVLEKHGNKLAYVASGTIRSNGETSLPERLKTLYDGISEVARTYAPDCAAIEKVFVNVNPQSTLLLGQARGAAICGLVGQGLPVFEYTALQLKVAVVGYGRANKEQVQEMVMRLLSLSGRPSSDAADALGVAICHANGGDTLGTLAGLAPELARKGMRVRRGRLVG.

Residues D7, E67, and D139 contribute to the active site. D7, E67, and D139 together coordinate Mg(2+).

This sequence belongs to the RuvC family. In terms of assembly, homodimer which binds Holliday junction (HJ) DNA. The HJ becomes 2-fold symmetrical on binding to RuvC with unstacked arms; it has a different conformation from HJ DNA in complex with RuvA. In the full resolvosome a probable DNA-RuvA(4)-RuvB(12)-RuvC(2) complex forms which resolves the HJ. It depends on Mg(2+) as a cofactor.

The protein localises to the cytoplasm. The catalysed reaction is Endonucleolytic cleavage at a junction such as a reciprocal single-stranded crossover between two homologous DNA duplexes (Holliday junction).. Its function is as follows. The RuvA-RuvB-RuvC complex processes Holliday junction (HJ) DNA during genetic recombination and DNA repair. Endonuclease that resolves HJ intermediates. Cleaves cruciform DNA by making single-stranded nicks across the HJ at symmetrical positions within the homologous arms, yielding a 5'-phosphate and a 3'-hydroxyl group; requires a central core of homology in the junction. The consensus cleavage sequence is 5'-(A/T)TT(C/G)-3'. Cleavage occurs on the 3'-side of the TT dinucleotide at the point of strand exchange. HJ branch migration catalyzed by RuvA-RuvB allows RuvC to scan DNA until it finds its consensus sequence, where it cleaves and resolves the cruciform DNA. The polypeptide is Crossover junction endodeoxyribonuclease RuvC (Cupriavidus metallidurans (strain ATCC 43123 / DSM 2839 / NBRC 102507 / CH34) (Ralstonia metallidurans)).